The sequence spans 203 residues: Urease accessory protein UreG (203 aa).

Residue 14-21 (GPVGSGKT) coordinates GTP.

It belongs to the SIMIBI class G3E GTPase family. UreG subfamily. Homodimer. UreD, UreF and UreG form a complex that acts as a GTP-hydrolysis-dependent molecular chaperone, activating the urease apoprotein by helping to assemble the nickel containing metallocenter of UreC. The UreE protein probably delivers the nickel.

The protein localises to the cytoplasm. Its function is as follows. Facilitates the functional incorporation of the urease nickel metallocenter. This process requires GTP hydrolysis, probably effectuated by UreG. This Agrobacterium fabrum (strain C58 / ATCC 33970) (Agrobacterium tumefaciens (strain C58)) protein is Urease accessory protein UreG.